Reading from the N-terminus, the 75-residue chain is Exodeoxyribonuclease 7 small subunit (75 aa).

This sequence belongs to the XseB family. As to quaternary structure, heterooligomer composed of large and small subunits.

The protein resides in the cytoplasm. The catalysed reaction is Exonucleolytic cleavage in either 5'- to 3'- or 3'- to 5'-direction to yield nucleoside 5'-phosphates.. Functionally, bidirectionally degrades single-stranded DNA into large acid-insoluble oligonucleotides, which are then degraded further into small acid-soluble oligonucleotides. The protein is Exodeoxyribonuclease 7 small subunit of Nostoc punctiforme (strain ATCC 29133 / PCC 73102).